The sequence spans 364 residues: Alanine racemase (364 aa).

The Proton acceptor; specific for D-alanine role is filled by K34. K34 carries the post-translational modification N6-(pyridoxal phosphate)lysine. Residue R129 coordinates substrate. Y259 (proton acceptor; specific for L-alanine) is an active-site residue. M307 provides a ligand contact to substrate.

This sequence belongs to the alanine racemase family. Pyridoxal 5'-phosphate serves as cofactor.

It catalyses the reaction L-alanine = D-alanine. The protein operates within amino-acid biosynthesis; D-alanine biosynthesis; D-alanine from L-alanine: step 1/1. Functionally, catalyzes the interconversion of L-alanine and D-alanine. May also act on other amino acids. This is Alanine racemase (alr) from Coxiella burnetii (strain CbuG_Q212) (Coxiella burnetii (strain Q212)).